A 155-amino-acid chain; its full sequence is 3-hydroxyacyl-[acyl-carrier-protein] dehydratase FabZ (155 aa).

The active site involves His-54.

The protein belongs to the thioester dehydratase family. FabZ subfamily.

It localises to the cytoplasm. It carries out the reaction a (3R)-hydroxyacyl-[ACP] = a (2E)-enoyl-[ACP] + H2O. Functionally, involved in unsaturated fatty acids biosynthesis. Catalyzes the dehydration of short chain beta-hydroxyacyl-ACPs and long chain saturated and unsaturated beta-hydroxyacyl-ACPs. The protein is 3-hydroxyacyl-[acyl-carrier-protein] dehydratase FabZ of Burkholderia ambifaria (strain MC40-6).